The primary structure comprises 137 residues: Ribosome-binding factor A (137 aa).

The disordered stretch occupies residues 114 to 137 (QLIDEARAEDRELRPEDDETGNNE). The segment covering 117–127 (DEARAEDRELR) has biased composition (basic and acidic residues). Residues 128-137 (PEDDETGNNE) show a composition bias toward acidic residues.

Belongs to the RbfA family. Monomer. Binds 30S ribosomal subunits, but not 50S ribosomal subunits or 70S ribosomes.

It localises to the cytoplasm. Its function is as follows. One of several proteins that assist in the late maturation steps of the functional core of the 30S ribosomal subunit. Associates with free 30S ribosomal subunits (but not with 30S subunits that are part of 70S ribosomes or polysomes). Required for efficient processing of 16S rRNA. May interact with the 5'-terminal helix region of 16S rRNA. This Alcanivorax borkumensis (strain ATCC 700651 / DSM 11573 / NCIMB 13689 / SK2) protein is Ribosome-binding factor A.